The following is a 341-amino-acid chain: L-threonine 3-dehydrogenase (341 aa).

Cys-38 serves as a coordination point for Zn(2+). Residues Thr-40 and His-43 each act as charge relay system in the active site. Zn(2+)-binding residues include His-63, Glu-64, Cys-93, Cys-96, Cys-99, and Cys-107. NAD(+)-binding positions include Ile-175, Asp-195, Arg-200, 262-264, and 286-287; these read LGI and IY.

Belongs to the zinc-containing alcohol dehydrogenase family. In terms of assembly, homotetramer. Zn(2+) is required as a cofactor.

The protein localises to the cytoplasm. It catalyses the reaction L-threonine + NAD(+) = (2S)-2-amino-3-oxobutanoate + NADH + H(+). It functions in the pathway amino-acid degradation; L-threonine degradation via oxydo-reductase pathway; glycine from L-threonine: step 1/2. Functionally, catalyzes the NAD(+)-dependent oxidation of L-threonine to 2-amino-3-ketobutyrate. The polypeptide is L-threonine 3-dehydrogenase (Edwardsiella ictaluri (strain 93-146)).